We begin with the raw amino-acid sequence, 305 residues long: UDP-3-O-acyl-N-acetylglucosamine deacetylase (305 aa).

Zn(2+) contacts are provided by His-78, His-235, and Asp-239. His-262 acts as the Proton donor in catalysis.

The protein belongs to the LpxC family. Zn(2+) serves as cofactor.

It catalyses the reaction a UDP-3-O-[(3R)-3-hydroxyacyl]-N-acetyl-alpha-D-glucosamine + H2O = a UDP-3-O-[(3R)-3-hydroxyacyl]-alpha-D-glucosamine + acetate. It functions in the pathway glycolipid biosynthesis; lipid IV(A) biosynthesis; lipid IV(A) from (3R)-3-hydroxytetradecanoyl-[acyl-carrier-protein] and UDP-N-acetyl-alpha-D-glucosamine: step 2/6. Its function is as follows. Catalyzes the hydrolysis of UDP-3-O-myristoyl-N-acetylglucosamine to form UDP-3-O-myristoylglucosamine and acetate, the committed step in lipid A biosynthesis. This chain is UDP-3-O-acyl-N-acetylglucosamine deacetylase, found in Geobacter sp. (strain M21).